The following is a 231-amino-acid chain: Lipid A acyltransferase PagP (231 aa).

The N-terminal stretch at 1–23 is a signal peptide; it reads MNKLTVRNFIVGLLIVFSLNSFS. The segment covering 24–43 has biased composition (low complexity); sequence SPPSISNSSSNSIDENSPIN. Residues 24-59 are disordered; that stretch reads SPPSISNSSSNSIDENSPINTFKISPDNQTSKKSDL. Active-site residues include His-100, Asp-145, and Ser-146.

It belongs to the lipid A palmitoyltransferase family. As to quaternary structure, homodimer.

The protein resides in the cell outer membrane. The catalysed reaction is a lipid A + a 1,2-diacyl-sn-glycero-3-phosphocholine = a hepta-acyl lipid A + a 2-acyl-sn-glycero-3-phosphocholine. The enzyme catalyses a lipid IVA + a 1,2-diacyl-sn-glycero-3-phosphocholine = a lipid IVB + a 2-acyl-sn-glycero-3-phosphocholine. It catalyses the reaction a lipid IIA + a 1,2-diacyl-sn-glycero-3-phosphocholine = a lipid IIB + a 2-acyl-sn-glycero-3-phosphocholine. Its function is as follows. Transfers a fatty acid residue from the sn-1 position of a phospholipid to the N-linked hydroxyfatty acid chain on the proximal unit of lipid A or its precursors. This is Lipid A acyltransferase PagP from Legionella longbeachae serogroup 1 (strain NSW150).